Consider the following 277-residue polypeptide: Co-chaperone protein DjlA (277 aa).

At 1–4 (MWGK) the chain is on the periplasmic side. A helical transmembrane segment spans residues 5–28 (ILGAFFGFLLGGPFGLLLGLFLGH). Residues 29–277 (KFDKARRNVY…DMIRKEKGFK (249 aa)) lie on the Cytoplasmic side of the membrane. The J domain occupies 211 to 277 (DAYEVLGVTE…DMIRKEKGFK (67 aa)).

As to quaternary structure, homodimer.

The protein resides in the cell inner membrane. Regulatory DnaK co-chaperone. Direct interaction between DnaK and DjlA is needed for the induction of the wcaABCDE operon, involved in the synthesis of a colanic acid polysaccharide capsule, possibly through activation of the RcsB/RcsC phosphotransfer signaling pathway. The colanic acid capsule may help the bacterium survive conditions outside the host. This is Co-chaperone protein DjlA from Photobacterium profundum (strain SS9).